Consider the following 258-residue polypeptide: Heat-labile enterotoxin A chain (258 aa).

The N-terminal stretch at 1-18 is a signal peptide; it reads MKNITFIFFILLASPLYA. 25–39 serves as a coordination point for NAD(+); it reads RADSRPPDEIKRSGG. The active site involves Glu130. Cys205 and Cys217 are disulfide-bonded.

It belongs to the enterotoxin A family. Heterohexamer of one A chain and of five B chains.

Functionally, the biological activity of the toxin is produced by the A chain, which activates intracellular adenyl cyclase. The chain is Heat-labile enterotoxin A chain (eltA) from Escherichia coli.